The sequence spans 390 residues: Putative gustatory receptor 59d (390 aa).

At 1-38 the chain is on the cytoplasmic side; the sequence is MADLLKLCLRIAYAYGRLTGVINFKIDLKTGQALVTRG. Residues 39-59 form a helical membrane-spanning segment; the sequence is ATLISVSTHLLIFALLLYQTM. Residues 60 to 75 lie on the Extracellular side of the membrane; sequence RKSVVNVMWKYANSLH. A helical transmembrane segment spans residues 76-96; the sequence is EYVFLVIAGFRVVCVFLELVS. Residues 97 to 128 lie on the Cytoplasmic side of the membrane; the sequence is RWSQRRTFVRLFNSFRRLYQRNPDIIQYCRRS. The helical transmembrane segment at 129-149 threads the bilayer; that stretch reads IVSKFFCVTMTETLHIIVTLA. Topologically, residues 150-156 are extracellular; sequence MMRNRLS. The chain crosses the membrane as a helical span at residues 157 to 177; the sequence is IALALRIWAVLSLTAIINVII. Over 178-252 the chain is Cytoplasmic; it reads TQYYVATACV…NLSTAYEGEV (75 aa). Residues 253 to 273 traverse the membrane as a helical segment; the sequence is VCLVITYYLNMLGTSYLLFSI. Topologically, residues 274 to 283 are extracellular; that stretch reads SKYGNFGNNL. A helical transmembrane segment spans residues 284–304; that stretch reads LVIITLCGIVYFVFYVVDCWI. Residues 305–366 lie on the Cytoplasmic side of the membrane; sequence NAFNVFYLLD…MYGLFEFGRG (62 aa). Residues 367–383 form a helical membrane-spanning segment; it reads TSFAVFNSLLTHSLLLI. Residues 384–390 are Extracellular-facing; sequence QYDVQNF.

The protein belongs to the insect chemoreceptor superfamily. Gustatory receptor (GR) family. Gr22e subfamily. Expressed in the adult labellar chemosensory neurons. In larvae, is expressed in neurons of the terminal external chemosensory organ as well as in the dorsal pharyngeal sense organ.

Its subcellular location is the cell membrane. Functionally, probable gustatory receptor which mediates acceptance or avoidance behavior, depending on its substrates. In Drosophila melanogaster (Fruit fly), this protein is Putative gustatory receptor 59d (Gr59d).